A 608-amino-acid chain; its full sequence is Aspartate--tRNA(Asp/Asn) ligase (608 aa).

Glu179 contributes to the L-aspartate binding site. The interval 203 to 206 is aspartate; that stretch reads QLFK. Arg225 contributes to the L-aspartate binding site. Residues 225 to 227 and Gln234 contribute to the ATP site; that span reads RDE. Position 461 (His461) interacts with L-aspartate. ATP is bound at residue Glu494. Arg501 provides a ligand contact to L-aspartate. ATP is bound at residue 546 to 549; it reads GLDR.

Belongs to the class-II aminoacyl-tRNA synthetase family. Type 1 subfamily. As to quaternary structure, homodimer.

It localises to the cytoplasm. It catalyses the reaction tRNA(Asx) + L-aspartate + ATP = L-aspartyl-tRNA(Asx) + AMP + diphosphate. In terms of biological role, aspartyl-tRNA synthetase with relaxed tRNA specificity since it is able to aspartylate not only its cognate tRNA(Asp) but also tRNA(Asn). Reaction proceeds in two steps: L-aspartate is first activated by ATP to form Asp-AMP and then transferred to the acceptor end of tRNA(Asp/Asn). The sequence is that of Aspartate--tRNA(Asp/Asn) ligase from Psychrobacter arcticus (strain DSM 17307 / VKM B-2377 / 273-4).